A 288-amino-acid chain; its full sequence is Phosphatidylserine decarboxylase proenzyme (288 aa).

Residues Asp90, His147, and Ser254 each act as charge relay system; for autoendoproteolytic cleavage activity in the active site. Catalysis depends on Ser254, which acts as the Schiff-base intermediate with substrate; via pyruvic acid; for decarboxylase activity. Ser254 is modified (pyruvic acid (Ser); by autocatalysis).

This sequence belongs to the phosphatidylserine decarboxylase family. PSD-B subfamily. Prokaryotic type I sub-subfamily. As to quaternary structure, heterodimer of a large membrane-associated beta subunit and a small pyruvoyl-containing alpha subunit. Pyruvate is required as a cofactor. In terms of processing, is synthesized initially as an inactive proenzyme. Formation of the active enzyme involves a self-maturation process in which the active site pyruvoyl group is generated from an internal serine residue via an autocatalytic post-translational modification. Two non-identical subunits are generated from the proenzyme in this reaction, and the pyruvate is formed at the N-terminus of the alpha chain, which is derived from the carboxyl end of the proenzyme. The autoendoproteolytic cleavage occurs by a canonical serine protease mechanism, in which the side chain hydroxyl group of the serine supplies its oxygen atom to form the C-terminus of the beta chain, while the remainder of the serine residue undergoes an oxidative deamination to produce ammonia and the pyruvoyl prosthetic group on the alpha chain. During this reaction, the Ser that is part of the protease active site of the proenzyme becomes the pyruvoyl prosthetic group, which constitutes an essential element of the active site of the mature decarboxylase.

The protein localises to the cell membrane. The enzyme catalyses a 1,2-diacyl-sn-glycero-3-phospho-L-serine + H(+) = a 1,2-diacyl-sn-glycero-3-phosphoethanolamine + CO2. It participates in phospholipid metabolism; phosphatidylethanolamine biosynthesis; phosphatidylethanolamine from CDP-diacylglycerol: step 2/2. In terms of biological role, catalyzes the formation of phosphatidylethanolamine (PtdEtn) from phosphatidylserine (PtdSer). The sequence is that of Phosphatidylserine decarboxylase proenzyme from Hamiltonella defensa subsp. Acyrthosiphon pisum (strain 5AT).